A 635-amino-acid chain; its full sequence is Threonine--tRNA ligase (635 aa).

Positions Met1–Thr61 constitute a TGS domain. A catalytic region spans residues Asp242–Pro533. Cys333, His384, and His510 together coordinate Zn(2+).

This sequence belongs to the class-II aminoacyl-tRNA synthetase family. In terms of assembly, homodimer. The cofactor is Zn(2+).

The protein localises to the cytoplasm. It catalyses the reaction tRNA(Thr) + L-threonine + ATP = L-threonyl-tRNA(Thr) + AMP + diphosphate + H(+). In terms of biological role, catalyzes the attachment of threonine to tRNA(Thr) in a two-step reaction: L-threonine is first activated by ATP to form Thr-AMP and then transferred to the acceptor end of tRNA(Thr). Also edits incorrectly charged L-seryl-tRNA(Thr). This chain is Threonine--tRNA ligase, found in Francisella philomiragia subsp. philomiragia (strain ATCC 25017 / CCUG 19701 / FSC 153 / O#319-036).